Here is an 84-residue protein sequence, read N- to C-terminus: MERSLRKKRIGRVVSDKMEKTIVVAVETKVRHPLYGKTVNRTTKFKVHDENNEAKINDRVSIMETRPLSKDKRWRLVEIVEKAK.

This sequence belongs to the universal ribosomal protein uS17 family. Part of the 30S ribosomal subunit.

In terms of biological role, one of the primary rRNA binding proteins, it binds specifically to the 5'-end of 16S ribosomal RNA. The protein is Small ribosomal subunit protein uS17 of Clostridium beijerinckii (strain ATCC 51743 / NCIMB 8052) (Clostridium acetobutylicum).